We begin with the raw amino-acid sequence, 304 residues long: Energy-coupling factor transporter ATP-binding protein EcfA2 (304 aa).

The ABC transporter domain occupies 11 to 260 (LKADEILAVS…QTFLEKTTIV (250 aa)). Residue 54 to 61 (GDSGSGKS) participates in ATP binding.

This sequence belongs to the ABC transporter superfamily. Energy-coupling factor EcfA family. In terms of assembly, forms a stable energy-coupling factor (ECF) transporter complex composed of 2 membrane-embedded substrate-binding proteins (S component), 2 ATP-binding proteins (A component) and 2 transmembrane proteins (T component).

The protein localises to the cell membrane. Its function is as follows. ATP-binding (A) component of a common energy-coupling factor (ECF) ABC-transporter complex. Unlike classic ABC transporters this ECF transporter provides the energy necessary to transport a number of different substrates. The sequence is that of Energy-coupling factor transporter ATP-binding protein EcfA2 from Mycoplasma genitalium (strain ATCC 33530 / DSM 19775 / NCTC 10195 / G37) (Mycoplasmoides genitalium).